A 224-amino-acid chain; its full sequence is Thiamine-phosphate synthase (224 aa).

4-amino-2-methyl-5-(diphosphooxymethyl)pyrimidine is bound by residues Q44 to K48 and N79. Mg(2+) is bound by residues D80 and D99. S117 serves as a coordination point for 4-amino-2-methyl-5-(diphosphooxymethyl)pyrimidine. Residue T143–T145 participates in 2-[(2R,5Z)-2-carboxy-4-methylthiazol-5(2H)-ylidene]ethyl phosphate binding. Position 146 (K146) interacts with 4-amino-2-methyl-5-(diphosphooxymethyl)pyrimidine. 2-[(2R,5Z)-2-carboxy-4-methylthiazol-5(2H)-ylidene]ethyl phosphate-binding positions include G175 and I195–S196.

It belongs to the thiamine-phosphate synthase family. The cofactor is Mg(2+).

It catalyses the reaction 2-[(2R,5Z)-2-carboxy-4-methylthiazol-5(2H)-ylidene]ethyl phosphate + 4-amino-2-methyl-5-(diphosphooxymethyl)pyrimidine + 2 H(+) = thiamine phosphate + CO2 + diphosphate. It carries out the reaction 2-(2-carboxy-4-methylthiazol-5-yl)ethyl phosphate + 4-amino-2-methyl-5-(diphosphooxymethyl)pyrimidine + 2 H(+) = thiamine phosphate + CO2 + diphosphate. The catalysed reaction is 4-methyl-5-(2-phosphooxyethyl)-thiazole + 4-amino-2-methyl-5-(diphosphooxymethyl)pyrimidine + H(+) = thiamine phosphate + diphosphate. It functions in the pathway cofactor biosynthesis; thiamine diphosphate biosynthesis; thiamine phosphate from 4-amino-2-methyl-5-diphosphomethylpyrimidine and 4-methyl-5-(2-phosphoethyl)-thiazole: step 1/1. Its function is as follows. Condenses 4-methyl-5-(beta-hydroxyethyl)thiazole monophosphate (THZ-P) and 2-methyl-4-amino-5-hydroxymethyl pyrimidine pyrophosphate (HMP-PP) to form thiamine monophosphate (TMP). The polypeptide is Thiamine-phosphate synthase (Bacillus velezensis (strain DSM 23117 / BGSC 10A6 / LMG 26770 / FZB42) (Bacillus amyloliquefaciens subsp. plantarum)).